Consider the following 282-residue polypeptide: Protein N-terminal and lysine N-methyltransferase efm7 (282 aa).

Positions 1-13 (MSKPEEVVNHVPE) are enriched in basic and acidic residues. Residues 1–32 (MSKPEEVVNHVPEDEGSDIEAGGLFEDPPDFY) form a disordered region. Residues W67, 93-95 (GAA), D115, W152, and A179 contribute to the S-adenosyl-L-methionine site.

Belongs to the class I-like SAM-binding methyltransferase superfamily. EFM7 family.

It localises to the cytoplasm. Its function is as follows. S-adenosyl-L-methionine-dependent protein methyltransferase that trimethylates the N-terminal glycine 'Gly-2' of elongation factor 1-alpha, before also catalyzing the mono- and dimethylation of 'Lys-3'. This chain is Protein N-terminal and lysine N-methyltransferase efm7 (nnt-1), found in Neurospora crassa (strain ATCC 24698 / 74-OR23-1A / CBS 708.71 / DSM 1257 / FGSC 987).